A 583-amino-acid chain; its full sequence is MVFKVSTVSTSPIDGQKPGTSGLRKKVKVFKQPNYLENFVQATFNALTAEKVKGATLVVSGDGRYYSKDAVQIIIKMAAANGVRRVWVGKNTLLSTPAVSAVIRERSGADGSKATGAFILTASHNPGGPTEDFGIKYNMENGGPAPESITDKIYENTKTIKEYPIAQDLPNVDISAVGVTSFEGPEGKFDVEVFDPADDYVKLMKSIFDFEAIRKLLSSPKFTFCYDALHGVAGAYAHRIFVEELGAQESALLNCTPKEDFGGGHPDPNLTYAKELVARMGLGKSDTGGEPPEFGAAADGDADRNMILGKRFFVTPSDSVAIIAANAIGAIPYFSSGLKGVARSMPTSAALDVVAKSLNLKFFEVPTGWKFFGNLMDAGMCSVCGEESFGTGSDHIREKDGIWAVLAWMSILAHKNKGNIDGNAKLVSVEDIVRQHWATYGRHYYTRYDYENVDAGKAKELMEHLVKLQSSIPEVNKIVKGIRSDVASVASADEFEYKDPVDGSISKHQGIRYLFEDGSRLVFRLSGTGSEGATIRLYIEQYEKDASKTGRESQEALSPLVDLALKLSKMEEFTGRSAPTVIT.

The alpha-D-glucose 1,6-bisphosphate site is built by Arg24 and Ser123. Residue Ser123 is the Phosphoserine intermediate of the active site. Mg(2+) contacts are provided by Ser123, Asp299, Asp301, and Asp303. Ser123 is subject to Phosphoserine. Positions 303, 304, 367, 386, 388, and 399 each coordinate alpha-D-glucose 1,6-bisphosphate.

The protein belongs to the phosphohexose mutase family. As to quaternary structure, monomer. Mg(2+) is required as a cofactor.

The protein resides in the cytoplasm. It carries out the reaction alpha-D-glucose 1-phosphate = alpha-D-glucose 6-phosphate. The enzyme catalyses O-phospho-L-seryl-[protein] + alpha-D-glucose 1-phosphate = alpha-D-glucose 1,6-bisphosphate + L-seryl-[protein]. The catalysed reaction is alpha-D-glucose 1,6-bisphosphate + L-seryl-[protein] = O-phospho-L-seryl-[protein] + alpha-D-glucose 6-phosphate. In terms of biological role, catalyzes the reversible isomerization of alpha-D-glucose 1-phosphate to alpha-D-glucose 6-phosphate. The mechanism proceeds via the intermediate compound alpha-D-glucose 1,6-bisphosphate. This enzyme participates in both the breakdown and synthesis of glucose. This Arabidopsis thaliana (Mouse-ear cress) protein is Probable phosphoglucomutase, cytoplasmic 1.